The following is a 142-amino-acid chain: MAKKVDGYIKLQVAAGAANPSPPVGPALGQKGVNIMEFCKAFNARTDKFEKGMPIPVVITVYSDRSFTFETKTPPASFLLLKAAGLKSGSGRPNTEKVGTIKRSAVQEIAETKAADMTGADIEAMTRSIEGTARSMGLVVED.

The protein belongs to the universal ribosomal protein uL11 family. In terms of assembly, part of the ribosomal stalk of the 50S ribosomal subunit. Interacts with L10 and the large rRNA to form the base of the stalk. L10 forms an elongated spine to which L12 dimers bind in a sequential fashion forming a multimeric L10(L12)X complex. One or more lysine residues are methylated.

Its function is as follows. Forms part of the ribosomal stalk which helps the ribosome interact with GTP-bound translation factors. This Shewanella halifaxensis (strain HAW-EB4) protein is Large ribosomal subunit protein uL11.